The sequence spans 654 residues: Endoplasmic reticulum chaperone BiP (654 aa).

The N-terminal stretch at 1-18 is a signal peptide; it reads MKFPMVAAALLLLCAVRA. The tract at residues 1–80 is required for interaction with ELAPOR1; the sequence is MKFPMVAAAL…EGERLIGDAA (80 aa). 36–39 lines the ATP pocket; the sequence is GTTY. S86 carries the phosphoserine modification. An ATP-binding site is contributed by K96. N6-acetyllysine is present on K125. The segment at 125–280 is nucleotide-binding (NBD); that stretch reads KPYIQVDIGG…KKKTGKDVRK (156 aa). The residue at position 160 (Y160) is a 3'-nitrotyrosine. K213 is subject to N6-acetyllysine. 227–229 is a binding site for ATP; it reads GGT. K271 carries the post-translational modification N6-acetyllysine. Position 293–300 (293–300) interacts with ATP; sequence EKAKRALS. The residue at position 326 (K326) is an N6-acetyllysine. A Glycyl lysine isopeptide (Lys-Gly) (interchain with G-Cter in SUMO2) cross-link involves residue K352. K353 bears the N6-acetyllysine; alternate mark. K353 is covalently cross-linked (Glycyl lysine isopeptide (Lys-Gly) (interchain with G-Cter in SUMO1); alternate). Position 364–367 (364–367) interacts with ATP; that stretch reads GSTR. The interdomain linker stretch occupies residues 409–419; that stretch reads QDTGDLVLLDV. A substrate-binding (SBD) region spans residues 420–500; the sequence is CPLTLGIETV…PRGVPQIEVT (81 aa). At K447 the chain carries N6-succinyllysine. R492 is subject to Omega-N-methylarginine. The residue at position 518 (T518) is an O-AMP-threonine; alternate. T518 bears the Phosphothreonine; alternate mark. An N6,N6,N6-trimethyllysine; by METTL21A; in vitro modification is found at K585. K585 carries the post-translational modification N6,N6-dimethyllysine; alternate. K585 is subject to N6-methyllysine; alternate. K591 bears the N6-methyllysine mark. The segment at 632–654 is disordered; sequence SKLYGSAGPPPTGEEDTSEKDEL. Residues T643 and T648 each carry the phosphothreonine modification. Acidic residues predominate over residues 644 to 654; sequence GEEDTSEKDEL. S649 is modified (phosphoserine). The short motif at 651–654 is the Prevents secretion from ER element; the sequence is KDEL.

It belongs to the heat shock protein 70 family. In terms of assembly, monomer and homooligomer; homooligomerization via the interdomain linker inactivates the chaperone activity and acts as a storage of HSPA5/BiP molecules. Interacts with DNAJC1 (via J domain). Component of an EIF2 complex at least composed of CELF1/CUGBP1, CALR, CALR3, EIF2S1, EIF2S2, HSP90B1 and HSPA5. Part of a large chaperone multiprotein complex comprising DNAJB11, HSP90B1, HSPA5, HYOU, PDIA2, PDIA4, PDIA6, PPIB, SDF2L1, UGGT1 and very small amounts of ERP29, but not, or at very low levels, CALR nor CANX. Interacts with TMEM132A and TRIM21. May form a complex with ERLEC1, OS9, SEL1L and SYVN1. Interacts with DNAJC10. Interacts with DNAJB9/ERdj4; leading to recruit HSPA5/BiP to ERN1/IRE1. Interacts with ERN1/IRE1 (via luminal domain); the interaction takes place following interaction with DNAJB9/ERdj4 and leads to inactivate ERN1/IRE1, the interaction also competitively inhibits ERN1 interaction with MANF. Interacts directly with MANF (via SAP domain); the interaction inhibits ATP binding to HSPA5/BiP and subsequent nucleotide exchange. Interacts with EIF2AK3/PERK (via luminal domain); interaction leads to inactivate EIF2AK3/PERK. Interacts with MX1. Interacts with METTL23. Interacts with CEMIP; the interaction induces calcium leakage from the endoplasmic reticulum and cell migration. Interacts with PCSK4 form; the interaction takes place in the endoplasmic reticulum. Interacts with CIPC. Interacts with CCDC88B (via C-terminus); the interaction opposes ERN1-mediated JNK activation, protecting against apoptosis. Interacts with INPP5K; necessary for INPP5K localization at the endoplasmic reticulum. Interacts with LOXL2; leading to activate the ERN1/IRE1-XBP1 pathway of the unfolded protein response. Interacts with CLU under stressed condition; interaction increases CLU protein stability; facilitates its retrotranslocation and redistribution to the mitochondria; cooperatively suppress stress-induced apoptosis by stabilizing mitochondrial membrane integrity. Interacts with CCDC47. Interacts with CLN3. Interacts with ELAPOR1; may regulate the function of HSPA5 in apoptosis and cell proliferation. Interacts with CASP7. Interacts with ILDR2; the interaction stabilizes ILDR2 expression. Interacts with ADAM7. Post-translationally, in unstressed cells, AMPylation at Thr-518 by FICD inactivates the chaperome activity: AMPylated form is locked in a relatively inert state and only weakly stimulated by J domain-containing proteins. In response to endoplasmic reticulum stress, de-AMPylation by the same protein, FICD, restores the chaperone activity.

Its subcellular location is the endoplasmic reticulum lumen. It localises to the melanosome. The protein localises to the cytoplasm. The protein resides in the cell surface. The enzyme catalyses ATP + H2O = ADP + phosphate + H(+). The chaperone activity is regulated by ATP-induced allosteric coupling of the nucleotide-binding (NBD) and substrate-binding (SBD) domains. In the ADP-bound and nucleotide-free (apo) states, the two domains have little interaction. In contrast, in the ATP-bound state the two domains are tightly coupled, which results in drastically accelerated kinetics in both binding and release of polypeptide substrates. J domain-containing co-chaperones (DNAJB9/ERdj4 or DNAJC10/ERdj5) stimulate the ATPase activity and are required for efficient substrate recognition by HSPA5/BiP. Homooligomerization inactivates participating HSPA5/BiP protomers and probably act as reservoirs to store HSPA5/BiP molecules when they are not needed by the cell. Functionally, endoplasmic reticulum chaperone that plays a key role in protein folding and quality control in the endoplasmic reticulum lumen. Involved in the correct folding of proteins and degradation of misfolded proteins via its interaction with DNAJC10/ERdj5, probably to facilitate the release of DNAJC10/ERdj5 from its substrate. Acts as a key repressor of the EIF2AK3/PERK and ERN1/IRE1-mediated unfolded protein response (UPR). In the unstressed endoplasmic reticulum, recruited by DNAJB9/ERdj4 to the luminal region of ERN1/IRE1, leading to disrupt the dimerization of ERN1/IRE1, thereby inactivating ERN1/IRE1. Also binds and inactivates EIF2AK3/PERK in unstressed cells. Accumulation of misfolded protein in the endoplasmic reticulum causes release of HSPA5/BiP from ERN1/IRE1 and EIF2AK3/PERK, allowing their homodimerization and subsequent activation. Plays an auxiliary role in post-translational transport of small presecretory proteins across endoplasmic reticulum (ER). May function as an allosteric modulator for SEC61 channel-forming translocon complex, likely cooperating with SEC62 to enable the productive insertion of these precursors into SEC61 channel. Appears to specifically regulate translocation of precursors having inhibitory residues in their mature region that weaken channel gating. May also play a role in apoptosis and cell proliferation. This Cricetulus griseus (Chinese hamster) protein is Endoplasmic reticulum chaperone BiP.